Consider the following 36-residue polypeptide: Alpha-conotoxin-like Pu1.3 (36 aa).

Positions 1–21 are excised as a propeptide; that stretch reads SDGRNAGADRKGFGLISQMFK. 2 cysteine pairs are disulfide-bonded: cysteine 24/cysteine 30 and cysteine 25/cysteine 36.

It belongs to the conotoxin A superfamily. As to expression, expressed by the venom duct.

It is found in the secreted. Alpha-conotoxins act on postsynaptic membranes, they bind to the nicotinic acetylcholine receptors (nAChR) and thus inhibit them. This chain is Alpha-conotoxin-like Pu1.3, found in Conus pulicarius (Flea-bitten cone).